The sequence spans 211 residues: Arginine exporter protein ArgO (211 aa).

Helical transmembrane passes span 1-21 (MISYYFQGFALGAAMILPLGP), 37-57 (LMIALLCALSDLVLISAGIFG), 68-88 (LLALVTWGGVAFLLWYGLGAL), 111-131 (IIATMLAVTWLNPHVYLDTFV), 147-167 (WFALGTISASFLWFFGLALLA), and 179-199 (AQRIINILVGVVMWLIAFQLA).

It belongs to the LysE/ArgO transporter (TC 2.A.75) family.

The protein resides in the cell inner membrane. The enzyme catalyses L-arginine(in) = L-arginine(out). In terms of biological role, involved in the export of arginine. Important to control the intracellular level of arginine and the correct balance between arginine and lysine. This chain is Arginine exporter protein ArgO, found in Salmonella enteritidis PT4 (strain P125109).